The chain runs to 455 residues: Bifunctional protein GlmU (455 aa).

A pyrophosphorylase region spans residues 1 to 230; it reads MVNKNAIILA…FDESMGVNDR (230 aa). UDP-N-acetyl-alpha-D-glucosamine-binding positions include 9–12, lysine 23, glutamine 73, 78–79, 101–103, glycine 140, glutamate 155, asparagine 170, and asparagine 228; these read LAAG, GT, and SGD. Aspartate 103 lines the Mg(2+) pocket. Asparagine 228 serves as a coordination point for Mg(2+). Residues 231–251 are linker; it reads SALAKATKIMQKRINTQLMKD. Positions 252-455 are N-acetyltransferase; sequence GVTLVDPETA…KPGYAKKLPW (204 aa). Arginine 333 and lysine 351 together coordinate UDP-N-acetyl-alpha-D-glucosamine. The active-site Proton acceptor is histidine 363. Residues tyrosine 366 and asparagine 377 each coordinate UDP-N-acetyl-alpha-D-glucosamine. Residues 386 to 387, serine 405, alanine 423, and arginine 440 contribute to the acetyl-CoA site; that span reads NY.

This sequence in the N-terminal section; belongs to the N-acetylglucosamine-1-phosphate uridyltransferase family. In the C-terminal section; belongs to the transferase hexapeptide repeat family. Homotrimer. Requires Mg(2+) as cofactor.

Its subcellular location is the cytoplasm. The enzyme catalyses alpha-D-glucosamine 1-phosphate + acetyl-CoA = N-acetyl-alpha-D-glucosamine 1-phosphate + CoA + H(+). The catalysed reaction is N-acetyl-alpha-D-glucosamine 1-phosphate + UTP + H(+) = UDP-N-acetyl-alpha-D-glucosamine + diphosphate. Its pathway is nucleotide-sugar biosynthesis; UDP-N-acetyl-alpha-D-glucosamine biosynthesis; N-acetyl-alpha-D-glucosamine 1-phosphate from alpha-D-glucosamine 6-phosphate (route II): step 2/2. The protein operates within nucleotide-sugar biosynthesis; UDP-N-acetyl-alpha-D-glucosamine biosynthesis; UDP-N-acetyl-alpha-D-glucosamine from N-acetyl-alpha-D-glucosamine 1-phosphate: step 1/1. It functions in the pathway bacterial outer membrane biogenesis; LPS lipid A biosynthesis. Functionally, catalyzes the last two sequential reactions in the de novo biosynthetic pathway for UDP-N-acetylglucosamine (UDP-GlcNAc). The C-terminal domain catalyzes the transfer of acetyl group from acetyl coenzyme A to glucosamine-1-phosphate (GlcN-1-P) to produce N-acetylglucosamine-1-phosphate (GlcNAc-1-P), which is converted into UDP-GlcNAc by the transfer of uridine 5-monophosphate (from uridine 5-triphosphate), a reaction catalyzed by the N-terminal domain. In Limosilactobacillus fermentum (strain NBRC 3956 / LMG 18251) (Lactobacillus fermentum), this protein is Bifunctional protein GlmU.